A 157-amino-acid chain; its full sequence is Subgroup A Rous sarcoma virus receptor pg950 (157 aa).

The first 19 residues, 1–19 (MARLLPALLLLLLPGNVTG), serve as a signal peptide directing secretion. Residues Asn-20 and Asn-24 are each glycosylated (N-linked (GlcNAc...) asparagine). The Extracellular portion of the chain corresponds to 20 to 102 (NGSGNGSLSR…RALPARNHGR (83 aa)). The 44-residue stretch at 28 to 71 (SRCPPGQFRCSEPPGAHGECYPQDWLCDGHPDCDDGRDEWGCGT) folds into the LDL-receptor class A domain. Cystine bridges form between Cys-30/Cys-47, Cys-37/Cys-60, and Cys-54/Cys-69. Residue Asn-81 is glycosylated (N-linked (GlcNAc...) asparagine). The helical transmembrane segment at 103-125 (MWMLITAVLLCCLVAVGGIAAWG) threads the bilayer. At 126-157 (KSKAKSRSDIFSLASASKELLVPDKSQADLFS) the chain is on the cytoplasmic side.

(Microbial infection) Interacts with Rous sarcoma virus envelope protein; this interaction allows the viral attachment.

Its subcellular location is the membrane. Its function is as follows. Responsible for susceptibility to the retrovirus subgroup A Rous sarcoma virus. This chain is Subgroup A Rous sarcoma virus receptor pg950, found in Coturnix japonica (Japanese quail).